The sequence spans 697 residues: Alpha-1,4-glucan:maltose-1-phosphate maltosyltransferase (697 aa).

Lysine 284 provides a ligand contact to alpha-maltose 1-phosphate. Residues arginine 286–serine 305 form a disordered region. Alpha-maltose 1-phosphate is bound by residues glutamine 344 and aspartate 379. The Nucleophile role is filled by aspartate 414. Asparagine 415 lines the alpha-maltose 1-phosphate pocket. Glutamate 443 acts as the Proton donor in catalysis. Lysine 553–tyrosine 554 is a binding site for alpha-maltose 1-phosphate.

The protein belongs to the glycosyl hydrolase 13 family. GlgE subfamily. As to quaternary structure, homodimer.

It carries out the reaction alpha-maltose 1-phosphate + [(1-&gt;4)-alpha-D-glucosyl](n) = [(1-&gt;4)-alpha-D-glucosyl](n+2) + phosphate. It functions in the pathway glycan biosynthesis; glycogen biosynthesis. The transfer reaction from maltose-1-P to glycogen is inhibited by micromolar amounts of inorganic phosphate or arsenate but is only slightly inhibited by millimolar concentrations of glucose-1-P, glucose-6-P, or inorganic pyrophosphate. Is also inhibited by ATP, by 1,4-dideoxy-1,4-imino-D-arabinitol (DIA), but not by isofagomine. Its function is as follows. Maltosyltransferase that uses maltose 1-phosphate (M1P) as the sugar donor to elongate linear or branched alpha-(1-&gt;4)-glucans. Is also able to catalyze the reverse reaction in vitro. Cannot use glucose 1-phosphate as substrate. Is involved in a branched alpha-glucan biosynthetic pathway from trehalose, together with TreS, Mak and GlgB. The chain is Alpha-1,4-glucan:maltose-1-phosphate maltosyltransferase (glgE) from Mycolicibacterium smegmatis (strain ATCC 700084 / mc(2)155) (Mycobacterium smegmatis).